We begin with the raw amino-acid sequence, 379 residues long: Glutamate 5-kinase (379 aa).

Residue Lys19 coordinates ATP. Ser59, Asp146, and Asn158 together coordinate substrate. 178-179 lines the ATP pocket; sequence TD. Positions 285–363 constitute a PUA domain; sequence RGAVTVDAGA…SEFERLLGYV (79 aa).

This sequence belongs to the glutamate 5-kinase family.

It is found in the cytoplasm. The enzyme catalyses L-glutamate + ATP = L-glutamyl 5-phosphate + ADP. It participates in amino-acid biosynthesis; L-proline biosynthesis; L-glutamate 5-semialdehyde from L-glutamate: step 1/2. Catalyzes the transfer of a phosphate group to glutamate to form L-glutamate 5-phosphate. This is Glutamate 5-kinase from Variovorax paradoxus (strain S110).